Reading from the N-terminus, the 497-residue chain is Cysteine--tRNA ligase (497 aa).

Cys-34 contacts Zn(2+). Residues 36–46 carry the 'HIGH' region motif; that stretch reads PTVYDFAHIGN. Zn(2+) contacts are provided by Cys-243, His-268, and Glu-272. A 'KMSKS' region motif is present at residues 301–305; sequence KMAKS. Lys-304 serves as a coordination point for ATP. Residues 478-497 are disordered; sequence LMDYKDPETGERRTKWEVKR. Positions 480 to 497 are enriched in basic and acidic residues; that stretch reads DYKDPETGERRTKWEVKR.

It belongs to the class-I aminoacyl-tRNA synthetase family. As to quaternary structure, monomer. It depends on Zn(2+) as a cofactor.

The protein resides in the cytoplasm. It carries out the reaction tRNA(Cys) + L-cysteine + ATP = L-cysteinyl-tRNA(Cys) + AMP + diphosphate. The chain is Cysteine--tRNA ligase from Chelativorans sp. (strain BNC1).